The sequence spans 214 residues: Large ribosomal subunit protein uL4c (214 aa).

A disordered region spans residues 43-80 (KQSNEKRQGSANTKTRSEVRGGGRKPWRQKGTGRARAG). Residues 64–75 (GGRKPWRQKGTG) show a composition bias toward basic residues.

This sequence belongs to the universal ribosomal protein uL4 family. In terms of assembly, part of the 50S ribosomal subunit.

The protein resides in the plastid. Its subcellular location is the chloroplast. Functionally, probably binds the 23S rRNA. The sequence is that of Large ribosomal subunit protein uL4c (rpl4) from Porphyra purpurea (Red seaweed).